A 137-amino-acid polypeptide reads, in one-letter code: Small ribosomal subunit protein uS12 (137 aa).

The residue at position 102 (Asp102) is a 3-methylthioaspartic acid.

The protein belongs to the universal ribosomal protein uS12 family. In terms of assembly, part of the 30S ribosomal subunit. Contacts proteins S8 and S17. May interact with IF1 in the 30S initiation complex.

In terms of biological role, with S4 and S5 plays an important role in translational accuracy. Interacts with and stabilizes bases of the 16S rRNA that are involved in tRNA selection in the A site and with the mRNA backbone. Located at the interface of the 30S and 50S subunits, it traverses the body of the 30S subunit contacting proteins on the other side and probably holding the rRNA structure together. The combined cluster of proteins S8, S12 and S17 appears to hold together the shoulder and platform of the 30S subunit. The protein is Small ribosomal subunit protein uS12 of Phytoplasma mali (strain AT).